The chain runs to 205 residues: MCAAQRSAAALAAAAPRTVYAFSARPLAGGEPFNLSSLRGKVLLIENVASLUGTTVRDYTQMNDLQRRLGPRGLVVLGFPCNQFGHQENAKNEEILNCLKYVRPGGGFEPNFMLFEKCEVNGEKAHPLFAFLREVLPTPSDDATALMTDPKFITWSPVCRNDVSWNFEKFLVGPDGVPVRRYSRRFLTIDIEPDIETLLSQGASA.

Ser-37 carries the post-translational modification Phosphoserine. Sec-52 is an active-site residue. Position 52 (Sec-52) is a non-standard amino acid, selenocysteine. N6-acetyllysine; alternate occurs at positions 91 and 117. N6-succinyllysine; alternate occurs at positions 91 and 117. The N-linked (Glc) (glycation) lysine; in vitro glycan is linked to Lys-117. Lys-124 carries the N6-acetyllysine modification. Lys-151 is modified (N6-acetyllysine; alternate). Lys-151 is modified (N6-succinyllysine; alternate). Ser-200 and Ser-204 each carry phosphoserine.

It belongs to the glutathione peroxidase family. In terms of assembly, homotetramer. Interacts with MIEN1. During periods of oxidative stress, Sec-52 may react with a superoxide radical, irreversibly lose hydroselenide and be converted to dehydroalanine.

Its subcellular location is the cytoplasm. The protein localises to the mitochondrion. The catalysed reaction is 2 glutathione + H2O2 = glutathione disulfide + 2 H2O. It carries out the reaction a hydroperoxy polyunsaturated fatty acid + 2 glutathione = a hydroxy polyunsaturated fatty acid + glutathione disulfide + H2O. The enzyme catalyses tert-butyl hydroperoxide + 2 glutathione = tert-butanol + glutathione disulfide + H2O. It catalyses the reaction cumene hydroperoxide + 2 glutathione = 2-phenylpropan-2-ol + glutathione disulfide + H2O. The catalysed reaction is (13S)-hydroperoxy-(9Z,11E)-octadecadienoate + 2 glutathione = (13S)-hydroxy-(9Z,11E)-octadecadienoate + glutathione disulfide + H2O. It carries out the reaction (9S)-hydroperoxy-(10E,12Z)-octadecadienoate + 2 glutathione = (9S)-hydroxy-(10E,12Z)-octadecadienoate + glutathione disulfide + H2O. The enzyme catalyses (5S)-hydroperoxy-(6E,8Z,11Z,14Z)-eicosatetraenoate + 2 glutathione = (5S)-hydroxy-(6E,8Z,11Z,14Z)-eicosatetraenoate + glutathione disulfide + H2O. It catalyses the reaction (12S)-hydroperoxy-(5Z,8Z,10E,14Z)-eicosatetraenoate + 2 glutathione = (12S)-hydroxy-(5Z,8Z,10E,14Z)-eicosatetraenoate + glutathione disulfide + H2O. The catalysed reaction is (12R)-hydroperoxy-(5Z,8Z,10E,14Z)-eicosatetraenoate + 2 glutathione = (12R)-hydroxy-(5Z,8Z,10E,14Z)-eicosatetraenoate + glutathione disulfide + H2O. It carries out the reaction (15S)-hydroperoxy-(5Z,8Z,11Z,13E)-eicosatetraenoate + 2 glutathione = (15S)-hydroxy-(5Z,8Z,11Z,13E)-eicosatetraenoate + glutathione disulfide + H2O. The enzyme catalyses (5S)-hydroperoxy-(6E,8Z,11Z,14Z,17Z)-eicosapentaenoate + 2 glutathione = (5S)-hydroxy-(6E,8Z,11Z,14Z,17Z)-eicosapentaenoate + glutathione disulfide + H2O. It catalyses the reaction (15S)-hydroperoxy-(5Z,8Z,11Z,13E,17Z)-eicosapentaenoate + 2 glutathione = (15S)-hydroxy-(5Z,8Z,11Z,13E,17Z)-eicosapentaenoate + glutathione disulfide + H2O. The catalysed reaction is (15S)-hydroperoxy-(11Z,13E)-eicosadienoate + 2 glutathione = (15S)-hydroxy-(11Z,13E)-eicosadienoate + glutathione disulfide + H2O. It carries out the reaction (17S)-hydroperoxy-(4Z,7Z,10Z,13Z,15E,19Z)-docosahexaenoate + 2 glutathione = (17S)-hydroxy-(4Z,7Z,10Z,13Z,15E,19Z)-docosahexaenoate + glutathione disulfide + H2O. Catalyzes the reduction of hydroperoxides in a glutathione-dependent manner thus regulating cellular redox homeostasis. Can reduce small soluble hydroperoxides such as H2O2, cumene hydroperoxide and tert-butyl hydroperoxide, as well as several fatty acid-derived hydroperoxides. In platelets catalyzes the reduction of 12-hydroperoxyeicosatetraenoic acid, the primary product of the arachidonate 12-lipoxygenase pathway. In Bos taurus (Bovine), this protein is Glutathione peroxidase 1 (GPX1).